A 359-amino-acid polypeptide reads, in one-letter code: Palmitoyltransferase PFA5 (359 aa).

Helical transmembrane passes span 10-30 (WWYSLVPILCICIMCYGAIAY), 47-67 (AAAIGMTCLHLIIVILLWIIW), 164-184 (LFNQFLMCFLMHALIIFVSVV), and 206-226 (LVVLSLSCLVLLMVGALFISF). Residues 120–170 (VWCSVCQSLKGLRTHHSVHLGFCVPRLDHYCVWLGTVIGRRNYRLFNQFLM) enclose the DHHC domain.

This sequence belongs to the DHHC palmitoyltransferase family. PFA5 subfamily. In terms of processing, autopalmitoylated.

The protein localises to the membrane. The catalysed reaction is L-cysteinyl-[protein] + hexadecanoyl-CoA = S-hexadecanoyl-L-cysteinyl-[protein] + CoA. The sequence is that of Palmitoyltransferase PFA5 (PFA5) from Eremothecium gossypii (strain ATCC 10895 / CBS 109.51 / FGSC 9923 / NRRL Y-1056) (Yeast).